The chain runs to 253 residues: uncharacterized protein (253 aa).

Belongs to the herpesviridae BTRF1 family.

This is an uncharacterized protein from Saimiriine herpesvirus 2 (strain 11) (SaHV-2).